A 164-amino-acid chain; its full sequence is Large ribosomal subunit protein bL9 (164 aa).

This sequence belongs to the bacterial ribosomal protein bL9 family.

Its function is as follows. Binds to the 23S rRNA. This Psychrobacter sp. (strain PRwf-1) protein is Large ribosomal subunit protein bL9.